A 159-amino-acid chain; its full sequence is MIKLTDEGEKMLRECAESLVDLFAKNRIVKIKAKVTSGLGEGRIFVSLPYYMEAFNKFLGFQPYPGTLNAVIYDRISMENRLLLDLSRGILIPEHKEPNRVLGSVKAFPASINSVSPVAVVIPTRTTHPKSVVELLSPHKLREKLELEDGDEIEIEVYL.

Residue 38–43 (GLGEGR) coordinates CDP. Residues T67 and N69 each coordinate Mg(2+). 2 residues coordinate FMN: T126 and E134. 139–142 (HKLR) provides a ligand contact to CDP.

Belongs to the archaeal riboflavin kinase family. The cofactor is Mg(2+).

The catalysed reaction is riboflavin + CTP = CDP + FMN + H(+). It participates in cofactor biosynthesis; FMN biosynthesis; FMN from riboflavin (CTP route): step 1/1. Its function is as follows. Catalyzes the CTP-dependent phosphorylation of riboflavin (vitamin B2) to form flavin mononucleotide (FMN). This chain is Riboflavin kinase, found in Sulfolobus acidocaldarius (strain ATCC 33909 / DSM 639 / JCM 8929 / NBRC 15157 / NCIMB 11770).